A 122-amino-acid polypeptide reads, in one-letter code: Large ribosomal subunit protein uL14c (122 aa).

This sequence belongs to the universal ribosomal protein uL14 family. As to quaternary structure, part of the 50S ribosomal subunit.

It is found in the plastid. The protein resides in the chloroplast. Binds to 23S rRNA. This Cryptomeria japonica (Japanese cedar) protein is Large ribosomal subunit protein uL14c.